The following is a 549-amino-acid chain: Glucose-6-phosphate isomerase (549 aa).

Lys-80, Lys-228, and Lys-234 each carry N6-acetyllysine. Glu-355 functions as the Proton donor in the catalytic mechanism. Active-site residues include His-386 and Lys-514.

It belongs to the GPI family.

Its subcellular location is the cytoplasm. The enzyme catalyses alpha-D-glucose 6-phosphate = beta-D-fructose 6-phosphate. It participates in carbohydrate biosynthesis; gluconeogenesis. It functions in the pathway carbohydrate degradation; glycolysis; D-glyceraldehyde 3-phosphate and glycerone phosphate from D-glucose: step 2/4. Functionally, catalyzes the reversible isomerization of glucose-6-phosphate to fructose-6-phosphate. The protein is Glucose-6-phosphate isomerase of Escherichia coli O17:K52:H18 (strain UMN026 / ExPEC).